The following is a 389-amino-acid chain: Na(+)/H(+) antiporter NhaA 1 (389 aa).

11 helical membrane-spanning segments follow: residues 12-32 (VLNEAFGGVLLIVCTLLALLV), 62-82 (FLLWINDGLISIFFFAIGLEL), 97-117 (IVLPFMAALGGILIPAMLFAL), 128-148 (GWAIPTATDTAFALAILMMCG), 157-177 (IFLLSLAIFDDVGAILIIAIF), 184-204 (IVAFVVAGLAILAMLILNLLG), 220-240 (ISVLKSGVHATLAGIVTAFFI), 260-280 (FWIAFIILPLFAFANAGVNLS), 282-302 (IDIGAIFSGVSIGIFLGLFVG), 331-351 (LYGVCILTGIGFTMSLFIDGL), and 365-385 (LAILIASFCSGIWGFIYLKFF).

Belongs to the NhaA Na(+)/H(+) (TC 2.A.33) antiporter family.

It localises to the cell inner membrane. The enzyme catalyses Na(+)(in) + 2 H(+)(out) = Na(+)(out) + 2 H(+)(in). In terms of biological role, na(+)/H(+) antiporter that extrudes sodium in exchange for external protons. The sequence is that of Na(+)/H(+) antiporter NhaA 1 from Campylobacter jejuni (strain RM1221).